Here is a 979-residue protein sequence, read N- to C-terminus: UPF0182 protein MT0070 (979 aa).

7 consecutive transmembrane segments (helical) span residues 19-41, 63-85, 114-136, 174-196, 208-230, 261-280, and 285-307; these read LVTA…DIYV, LAIV…LLAY, LFGW…FDWV, WLFV…FGGL, AARV…AYWL, LVLV…AIFL, and IPAM…WPLL. The tract at residues 894–948 is disordered; sequence VFGPGTGRVATXPGGDAASAPPPGAGGPAPPQGVPPPRTTQPPAAPPRGPDVPPA. The span at 913-946 shows a compositional bias: pro residues; sequence APPPGAGGPAPPQGVPPPRTTQPPAAPPRGPDVP.

Belongs to the UPF0182 family.

Its subcellular location is the cell membrane. This chain is UPF0182 protein MT0070, found in Mycobacterium tuberculosis (strain CDC 1551 / Oshkosh).